Here is a 1365-residue protein sequence, read N- to C-terminus: Histone-lysine N-methyltransferase NSD2 (1365 aa).

Phosphothreonine is present on residues Thr110 and Thr114. Position 121 is a phosphoserine (Ser121). Positions 149 to 170 are disordered; that stretch reads ADVSQSEENGQKPENKARRNRK. Ser172 carries the phosphoserine modification. One can recognise a PWWP 1 domain in the interval 222 to 286; that stretch reads VGDLVWSKVS…FEKSLVAFEG (65 aa). Ser376 is subject to Phosphoserine. Disordered stretches follow at residues 376 to 455 and 516 to 658; these read SSGV…RKGD and EDSG…SKKS. Thr422 is modified (phosphothreonine). The segment at residues 453-521 is a DNA-binding region (HMG box); that stretch reads KGDAASQFLV…VQAEEDSGNV (69 aa). Position 544 is a phosphothreonine (Thr544). The span at 552–567 shows a compositional bias: basic and acidic residues; sequence DKHSLRKRDTITDKTA. The span at 580–590 shows a compositional bias: polar residues; it reads SLKSQAATKNL. Residues 606–622 are compositionally biased toward low complexity; that stretch reads AASSALGFSKSSSPSAS. Phosphoserine is present on Ser614. Acidic residues predominate over residues 632 to 648; the sequence is PGDEPSESPYESADETQ. 3 consecutive PHD-type zinc fingers follow at residues 667 to 713, 714 to 770, and 831 to 875; these read EYVC…CASG, IHSC…CHAS, and VSWC…CRAG. The PWWP 2 domain occupies 880 to 942; it reads FQDIIWVKLG…QARVFPYMEG (63 aa). The AWS domain maps to 1011–1061; it reads SEIPKCNCKPTDENPCGFDSECLNRMLMFECHPQVCPAGEFCQNQCFTKRQ. 7 residues coordinate Zn(2+): Cys1016, Cys1018, Cys1026, Cys1032, Cys1041, Cys1046, and Cys1052. One can recognise an SET domain in the interval 1063–1180; sequence PETKIIKTDG…AGTELTFNYN (118 aa). S-adenosyl-L-methionine is bound by residues Trp1075, 1115-1118, and 1141-1142; these read THFY and NH. Cys1144 serves as a coordination point for Zn(2+). Asn1186 lines the S-adenosyl-L-methionine pocket. Positions 1187-1203 constitute a Post-SET domain; it reads EKTVCRCGASNCSGFLG. Cys1191 contributes to the Zn(2+) binding site. Arg1192 is an S-adenosyl-L-methionine binding site. Positions 1193 and 1198 each coordinate Zn(2+). Residues 1207 to 1232 are disordered; the sequence is KTSTTLSSEEKGKKTKKKTRRRRAKG. The segment covering 1219 to 1230 has biased composition (basic residues); that stretch reads KKTKKKTRRRRA. The PHD-type 4; atypical zinc finger occupies 1239-1286; sequence EDECFRCGDGGQLVLCDRKFCTKAYHLSCLGLGKRPFGKWECPWHHCD. The disordered stretch occupies residues 1333 to 1365; the sequence is VRSTKTEKPPPEPGKPKGKRRRRRGWRRVTEGK. Residues 1348 to 1359 are compositionally biased toward basic residues; that stretch reads PKGKRRRRRGWR.

This sequence belongs to the class V-like SAM-binding methyltransferase superfamily. Histone-lysine methyltransferase family. SET2 subfamily. In terms of assembly, interacts with HDAC1. Interacts (via PHD-type zinc fingers 1, 2 and 3) with SALL1. Interacts (via PHD-type 1, 2 and 3) with SALL4. Interacts with NANOG. Interacts with OGT. Interacts (via HMG box) with NKX2-5. Widely expressed. Predominantly expressed in thymus and testis.

Its subcellular location is the nucleus. The protein resides in the chromosome. The protein localises to the cytoplasm. It is found in the nucleolus. The catalysed reaction is L-lysyl(36)-[histone H3] + S-adenosyl-L-methionine = N(6)-methyl-L-lysyl(36)-[histone H3] + S-adenosyl-L-homocysteine + H(+). It catalyses the reaction L-lysyl(36)-[histone H3] + 2 S-adenosyl-L-methionine = N(6),N(6)-dimethyl-L-lysyl(36)-[histone H3] + 2 S-adenosyl-L-homocysteine + 2 H(+). Its function is as follows. Histone methyltransferase which specifically dimethylates nucleosomal histone H3 at 'Lys-36' (H3K36me2). Also monomethylates nucleosomal histone H3 at 'Lys-36' (H3K36me) in vitro. Does not trimethylate nucleosomal histone H3 at 'Lys-36' (H3K36me3). However, specifically trimethylates histone H3 at 'Lys-36' (H3K36me3) at euchromatic regions in embryonic stem (ES) cells. By methylating histone H3 at 'Lys-36', involved in the regulation of gene transcription during various biological processes. In ES cells, associates with developmental transcription factors such as SALL1 and represses inappropriate gene transcription mediated by histone deacetylation. During heart development, associates with transcription factor NKX2-5 to repress transcription of NKX2-5 target genes. Plays an essential role in adipogenesis, by regulating expression of genes involved in pre-adipocyte differentiation. During T-cell receptor (TCR) and CD28-mediated T-cell activation, promotes the transcription of transcription factor BCL6 which is required for follicular helper T (Tfh) cell differentiation. During B-cell development, required for the generation of the B1 lineage. During B2 cell activation, may contribute to the control of isotype class switch recombination (CRS), splenic germinal center formation, and the humoral immune response. Plays a role in class switch recombination of the immunoglobulin heavy chain (IgH) locus during B-cell activation. By regulating the methylation of histone H3 at 'Lys-36' and histone H4 at 'Lys-20' at the IgH locus, involved in TP53BP1 recruitment to the IgH switch region and promotes the transcription of IgA. In terms of biological role, histone methyltransferase which specifically dimethylates nucleosomal histone H3 at 'Lys-36' (H3K36me2). Histone methyltransferase which specifically dimethylates nucleosomal histone H3 at 'Lys-36' (H3K36me2). Methylation of histone H3 at 'Lys-27' is controversial. Mono-, di- or tri-methylates histone H3 at 'Lys-27' (H3K27me, H3K27me2 and H3K27me3). Does not methylate histone H3 at 'Lys-27'. May act as a transcription regulator that binds DNA and suppresses IL5 transcription through HDAC recruitment. In Homo sapiens (Human), this protein is Histone-lysine N-methyltransferase NSD2.